A 475-amino-acid chain; its full sequence is ATP synthase subunit beta, chloroplastic (475 aa).

An ATP-binding site is contributed by 156-163 (GGAGVGKT).

The protein belongs to the ATPase alpha/beta chains family. In terms of assembly, F-type ATPases have 2 components, CF(1) - the catalytic core - and CF(0) - the membrane proton channel. CF(1) has five subunits: alpha(3), beta(3), gamma(1), delta(1), epsilon(1). CF(0) has four main subunits: a(1), b(1), b'(1) and c(9-12).

The protein localises to the plastid. The protein resides in the chloroplast thylakoid membrane. The catalysed reaction is ATP + H2O + 4 H(+)(in) = ADP + phosphate + 5 H(+)(out). Produces ATP from ADP in the presence of a proton gradient across the membrane. The catalytic sites are hosted primarily by the beta subunits. The polypeptide is ATP synthase subunit beta, chloroplastic (Trieres chinensis (Marine centric diatom)).